We begin with the raw amino-acid sequence, 928 residues long: Isoleucine--tRNA ligase (928 aa).

Residues 57–67 carry the 'HIGH' region motif; that stretch reads PFANGNIHMGH. Glu552 contributes to the L-isoleucyl-5'-AMP binding site. The 'KMSKS' region motif lies at 593–597; that stretch reads KMSKS. Lys596 serves as a coordination point for ATP. The Zn(2+) site is built by Cys887, Cys890, Cys907, and Cys910.

It belongs to the class-I aminoacyl-tRNA synthetase family. IleS type 1 subfamily. Monomer. It depends on Zn(2+) as a cofactor.

It localises to the cytoplasm. It catalyses the reaction tRNA(Ile) + L-isoleucine + ATP = L-isoleucyl-tRNA(Ile) + AMP + diphosphate. Catalyzes the attachment of isoleucine to tRNA(Ile). As IleRS can inadvertently accommodate and process structurally similar amino acids such as valine, to avoid such errors it has two additional distinct tRNA(Ile)-dependent editing activities. One activity is designated as 'pretransfer' editing and involves the hydrolysis of activated Val-AMP. The other activity is designated 'posttransfer' editing and involves deacylation of mischarged Val-tRNA(Ile). This Lacticaseibacillus paracasei (strain ATCC 334 / BCRC 17002 / CCUG 31169 / CIP 107868 / KCTC 3260 / NRRL B-441) (Lactobacillus paracasei) protein is Isoleucine--tRNA ligase.